Reading from the N-terminus, the 65-residue chain is Large ribosomal subunit protein bL35 (65 aa).

This sequence belongs to the bacterial ribosomal protein bL35 family.

The chain is Large ribosomal subunit protein bL35 from Photorhabdus laumondii subsp. laumondii (strain DSM 15139 / CIP 105565 / TT01) (Photorhabdus luminescens subsp. laumondii).